Here is a 535-residue protein sequence, read N- to C-terminus: Bifunctional purine biosynthesis protein PurH (535 aa).

Residues 6 to 151 form the MGS-like domain; sequence TRLPIRRALI…KNHKDVAIVV (146 aa).

The protein belongs to the PurH family.

The enzyme catalyses (6R)-10-formyltetrahydrofolate + 5-amino-1-(5-phospho-beta-D-ribosyl)imidazole-4-carboxamide = 5-formamido-1-(5-phospho-D-ribosyl)imidazole-4-carboxamide + (6S)-5,6,7,8-tetrahydrofolate. It carries out the reaction IMP + H2O = 5-formamido-1-(5-phospho-D-ribosyl)imidazole-4-carboxamide. It participates in purine metabolism; IMP biosynthesis via de novo pathway; 5-formamido-1-(5-phospho-D-ribosyl)imidazole-4-carboxamide from 5-amino-1-(5-phospho-D-ribosyl)imidazole-4-carboxamide (10-formyl THF route): step 1/1. The protein operates within purine metabolism; IMP biosynthesis via de novo pathway; IMP from 5-formamido-1-(5-phospho-D-ribosyl)imidazole-4-carboxamide: step 1/1. This chain is Bifunctional purine biosynthesis protein PurH, found in Pseudomonas fluorescens (strain SBW25).